We begin with the raw amino-acid sequence, 376 residues long: Peroxisomal membrane protein PEX14 (376 aa).

Residues 1–12 (MASSEQAEQPNQ) show a composition bias toward polar residues. The interval 1–24 (MASSEQAEQPNQPSSPPGSENVVP) is disordered. The residue at position 2 (Ala-2) is an N-acetylalanine. Over 2–108 (ASSEQAEQPN…YSPRGSRWRD (107 aa)) the chain is Peroxisomal. N6-acetyllysine is present on Lys-34. Residues 70-102 (SGTAADEPSPLGPATPVVPVQPPHLTPQPYSPR) are disordered. The span at 88-99 (PVQPPHLTPQPY) shows a compositional bias: pro residues. The chain crosses the membrane as a helical span at residues 109-127 (YGALAIIMAGIAFGFHQLY). The Cytoplasmic segment spans residues 128 to 376 (KRYLLPLILG…EGASNETERD (249 aa)). The interval 230 to 376 (PPSPSAPKIP…EGASNETERD (147 aa)) is disordered. A Phosphoserine modification is found at Ser-232. 2 stretches are compositionally biased toward low complexity: residues 247 to 259 (SSSPSSPAAVNHH) and 265 to 275 (SPVSNESTSSS). Phosphoserine is present on residues Ser-282 and Ser-334. A compositionally biased stretch (acidic residues) spans 323-341 (KEDEDDEDDDVSHVDEEDV). Residues 359-376 (QVEKLRRPEGASNETERD) are compositionally biased toward basic and acidic residues.

This sequence belongs to the peroxin-14 family. As to quaternary structure, interacts with PEX13; forming the PEX13-PEX14 docking complex. Interacts with PEX5 (via WxxxF/Y motifs). Interacts with PEX19. Interacts with tubulin.

The protein localises to the peroxisome membrane. Its function is as follows. Component of the PEX13-PEX14 docking complex, a translocon channel that specifically mediates the import of peroxisomal cargo proteins bound to PEX5 receptor. The PEX13-PEX14 docking complex forms a large import pore which can be opened to a diameter of about 9 nm. Mechanistically, PEX5 receptor along with cargo proteins associates with the PEX14 subunit of the PEX13-PEX14 docking complex in the cytosol, leading to the insertion of the receptor into the organelle membrane with the concomitant translocation of the cargo into the peroxisome matrix. Plays a key role for peroxisome movement through a direct interaction with tubulin. This is Peroxisomal membrane protein PEX14 from Mus musculus (Mouse).